A 145-amino-acid chain; its full sequence is Large ribosomal subunit protein uL15 (145 aa).

A disordered region spans residues 1 to 58 (MFSLLKPKGAAKRRKIVGRGPGSGLGKTSGRGQKGQKARNTSPRLGFEGGQTPLYRRL). A compositionally biased stretch (gly residues) spans 19–33 (RGPGSGLGKTSGRGQ).

Belongs to the universal ribosomal protein uL15 family. Part of the 50S ribosomal subunit.

Functionally, binds to the 23S rRNA. In Borreliella afzelii (strain PKo) (Borrelia afzelii), this protein is Large ribosomal subunit protein uL15.